Reading from the N-terminus, the 759-residue chain is Hormone-sensitive lipase (759 aa).

The Involved in the stabilization of the negatively charged intermediate by the formation of the oxyanion hole signature appears at 349-351 (HGG). The active site involves Ser-423. A disordered region spans residues 534 to 553 (GRKPQKTTSPTAESVRPTES). Position 557 is a phosphoserine (Ser-557). Ser-559 is subject to Phosphoserine; by AMPK. At Thr-574 the chain carries Phosphothreonine. The disordered stretch occupies residues 583–604 (LSNSEPSDSPEMSQSMETLGPS). Residues 585–604 (NSEPSDSPEMSQSMETLGPS) are compositionally biased toward polar residues. A phosphoserine mark is found at Ser-597, Ser-618, Ser-650, and Ser-651. Residues Asp-694 and His-724 contribute to the active site.

This sequence belongs to the 'GDXG' lipolytic enzyme family. In terms of assembly, monomer and homodimer. Interacts with CAVIN1 in the adipocyte cytoplasm. Interacts with PLIN5. Post-translationally, phosphorylation by AMPK reduces its translocation towards the lipid droplets.

It is found in the cell membrane. Its subcellular location is the membrane. The protein resides in the caveola. It localises to the cytoplasm. The protein localises to the cytosol. It is found in the lipid droplet. It catalyses the reaction a diacylglycerol + H2O = a monoacylglycerol + a fatty acid + H(+). It carries out the reaction a triacylglycerol + H2O = a diacylglycerol + a fatty acid + H(+). The enzyme catalyses a monoacylglycerol + H2O = glycerol + a fatty acid + H(+). The catalysed reaction is Hydrolyzes glycerol monoesters of long-chain fatty acids.. It catalyses the reaction cholesteryl (9Z-octadecenoate) + H2O = cholesterol + (9Z)-octadecenoate + H(+). It carries out the reaction all-trans-retinyl hexadecanoate + H2O = all-trans-retinol + hexadecanoate + H(+). The enzyme catalyses 1,2-di-(9Z-octadecenoyl)-glycerol + H2O = (9Z-octadecenoyl)-glycerol + (9Z)-octadecenoate + H(+). The catalysed reaction is 2-(5Z,8Z,11Z,14Z-eicosatetraenoyl)-glycerol + H2O = glycerol + (5Z,8Z,11Z,14Z)-eicosatetraenoate + H(+). It catalyses the reaction 1-(9Z-octadecenoyl)-glycerol + H2O = glycerol + (9Z)-octadecenoate + H(+). It carries out the reaction 2-(9Z-octadecenoyl)-glycerol + H2O = glycerol + (9Z)-octadecenoate + H(+). The enzyme catalyses 1-O-hexadecyl-2-acetyl-sn-glycerol + H2O = 1-O-hexadecyl-sn-glycerol + acetate + H(+). The catalysed reaction is 1,2-di-(9Z-octadecenoyl)-sn-glycerol + H2O = (9Z-octadecenoyl)-glycerol + (9Z)-octadecenoate + H(+). It catalyses the reaction 1,3-di-(9Z-octadecenoyl)-glycerol + H2O = 1-(9Z-octadecenoyl)-glycerol + (9Z)-octadecenoate + H(+). It carries out the reaction 1,2-di-(9Z-octadecenoyl)-glycerol + (9Z)-octadecenoate + H(+) = 1,2,3-tri-(9Z-octadecenoyl)-glycerol + H2O. The enzyme catalyses 2,3-di-(9Z)-octadecenoyl-sn-glycerol + H2O = 2-(9Z-octadecenoyl)-glycerol + (9Z)-octadecenoate + H(+). The catalysed reaction is 1,2,3-tri-(9Z-octadecenoyl)-glycerol + H2O = di-(9Z)-octadecenoylglycerol + (9Z)-octadecenoate + H(+). It catalyses the reaction 1,2-di-(9Z-octadecenoyl)-glycerol + H2O = 2-(9Z-octadecenoyl)-glycerol + (9Z)-octadecenoate + H(+). The protein operates within glycerolipid metabolism; triacylglycerol degradation. Functionally, lipase with broad substrate specificity, catalyzing the hydrolysis of triacylglycerols (TAGs), diacylglycerols (DAGs), monoacylglycerols (MAGs), cholesteryl esters and retinyl esters. Shows a preferential hydrolysis of DAGs over TAGs and MAGs and of the fatty acid (FA) esters at the sn-1 and sn-2 positions of the glycerol backbone in TAGs. Preferentially hydrolyzes FA esters at the sn-3 position of the glycerol backbone in DAGs. Catalyzes the hydrolysis of 2-arachidonoylglycerol, an endocannabinoid and of 2-acetyl monoalkylglycerol ether, the penultimate precursor of the pathway for de novo synthesis of platelet-activating factor. In adipose tissue and heart, it primarily hydrolyzes stored triglycerides to free fatty acids, while in steroidogenic tissues, it principally converts cholesteryl esters to free cholesterol for steroid hormone production. This chain is Hormone-sensitive lipase (Lipe), found in Mus musculus (Mouse).